Consider the following 418-residue polypeptide: Probable carboxypeptidase AO090166000075 (418 aa).

A signal peptide spans 1–18; the sequence is MKATDLFHVTALVAGALA. N-linked (GlcNAc...) asparagine glycosylation occurs at asparagine 74. Aspartate 147 lines the Zn(2+) pocket. A glycan (N-linked (GlcNAc...) asparagine) is linked at asparagine 168. Glutamate 179 acts as the Proton acceptor in catalysis. Glutamate 180 is a binding site for Zn(2+).

Belongs to the peptidase M20A family. Zn(2+) is required as a cofactor.

It localises to the secreted. The protein is Probable carboxypeptidase AO090166000075 of Aspergillus oryzae (strain ATCC 42149 / RIB 40) (Yellow koji mold).